Consider the following 563-residue polypeptide: Sulfite reductase [NADPH] hemoprotein beta-component (563 aa).

[4Fe-4S] cluster-binding residues include Cys-427, Cys-433, Cys-472, and Cys-476. Residue Cys-476 coordinates siroheme.

This sequence belongs to the nitrite and sulfite reductase 4Fe-4S domain family. Alpha(8)-beta(8). The alpha component is a flavoprotein, the beta component is a hemoprotein. Siroheme is required as a cofactor. It depends on [4Fe-4S] cluster as a cofactor.

It catalyses the reaction hydrogen sulfide + 3 NADP(+) + 3 H2O = sulfite + 3 NADPH + 4 H(+). Its pathway is sulfur metabolism; hydrogen sulfide biosynthesis; hydrogen sulfide from sulfite (NADPH route): step 1/1. In terms of biological role, component of the sulfite reductase complex that catalyzes the 6-electron reduction of sulfite to sulfide. This is one of several activities required for the biosynthesis of L-cysteine from sulfate. This is Sulfite reductase [NADPH] hemoprotein beta-component from Shewanella frigidimarina (strain NCIMB 400).